The sequence spans 936 residues: Intimin (936 aa).

Residues 1–41 (MIIHGFCTGTRHKHKLRKTFIMLGAGLGLFFSVNQNSFANG) form the signal peptide. Residues 63–112 (LFYTLKTGESVAQLSKSQGISVPVIWSLNKHLYSSESEMMKASPGQQIIL) form the LysM domain. Big-1 domains are found at residues 557-650 (ITNF…VIFV) and 657-748 (ITEI…VEFF). The BIG2 domain maps to 780–831 (KLQATGGNGKYTWKSSNTKIASVDNSGVITLNEKGSATITVVSGDNQSATYT). Residues C857 and C934 are joined by a disulfide bond.

This sequence belongs to the intimin/invasin family.

The protein resides in the cell outer membrane. An inverse autotransporter. This chain is Intimin (eae), found in Citrobacter freundii.